A 53-amino-acid polypeptide reads, in one-letter code: Kunitz-type trypsin inhibitor alpha chain (53 aa).

Residues 33-53 are disordered; that stretch reads GWGLPRRTGDESCPLNVKAVR.

The protein belongs to the protease inhibitor I3 (leguminous Kunitz-type inhibitor) family. Heterodimer of an alpha and a beta chain linked by a disulfide bond.

Its function is as follows. Inhibits trypsin with a Ki of 0.25 uM. Inhibits the trypsin-like proteases in midguts of larval H.armigera, S.exigua, and P.rapae. The polypeptide is Kunitz-type trypsin inhibitor alpha chain (Albizia kalkora (Kalkora mimosa)).